The following is a 101-amino-acid chain: Urease subunit beta (101 aa).

It belongs to the urease beta subunit family. In terms of assembly, heterotrimer of UreA (gamma), UreB (beta) and UreC (alpha) subunits. Three heterotrimers associate to form the active enzyme.

It localises to the cytoplasm. The catalysed reaction is urea + 2 H2O + H(+) = hydrogencarbonate + 2 NH4(+). It participates in nitrogen metabolism; urea degradation; CO(2) and NH(3) from urea (urease route): step 1/1. The polypeptide is Urease subunit beta (Leptothrix cholodnii (strain ATCC 51168 / LMG 8142 / SP-6) (Leptothrix discophora (strain SP-6))).